The chain runs to 192 residues: Signal peptidase complex catalytic subunit SEC11C (192 aa).

The Cytoplasmic segment spans residues Val-2–Arg-28. Residues Gln-29–Trp-48 form a helical; Signal-anchor for type II membrane protein membrane-spanning segment. Topologically, residues Lys-49–Ser-192 are lumenal. Residues Ser-68, His-108, and Asp-134 each act as charge relay system in the active site. Residues Ala-177 to Leu-188 form a C-terminal short (CTS) helix region.

Belongs to the peptidase S26B family. In terms of assembly, component of the signal peptidase complex paralog C (SPC-C) composed of a catalytic subunit SEC11C and three accessory subunits SPCS1, SPCS2 and SPCS3. Within the complex, interacts with SPCS2 and SPCS3. The complex induces a local thinning of the ER membrane which is used to measure the length of the signal peptide (SP) h-region of protein substrates. This ensures the selectivity of the complex towards h-regions shorter than 18-20 amino acids. In terms of processing, may undergo processing at the N-terminus.

Its subcellular location is the endoplasmic reticulum membrane. It carries out the reaction Cleavage of hydrophobic, N-terminal signal or leader sequences from secreted and periplasmic proteins.. In terms of biological role, catalytic component of the signal peptidase complex (SPC) which catalyzes the cleavage of N-terminal signal sequences from nascent proteins as they are translocated into the lumen of the endoplasmic reticulum. Specifically cleaves N-terminal signal peptides that contain a hydrophobic alpha-helix (h-region) shorter than 18-20 amino acids. In Canis lupus familiaris (Dog), this protein is Signal peptidase complex catalytic subunit SEC11C (SEC11C).